A 1341-amino-acid chain; its full sequence is DNA-directed RNA polymerase subunit beta (1341 aa).

This sequence belongs to the RNA polymerase beta chain family. In terms of assembly, the RNAP catalytic core consists of 2 alpha, 1 beta, 1 beta' and 1 omega subunit. When a sigma factor is associated with the core the holoenzyme is formed, which can initiate transcription.

The enzyme catalyses RNA(n) + a ribonucleoside 5'-triphosphate = RNA(n+1) + diphosphate. In terms of biological role, DNA-dependent RNA polymerase catalyzes the transcription of DNA into RNA using the four ribonucleoside triphosphates as substrates. The protein is DNA-directed RNA polymerase subunit beta of Photobacterium profundum (strain SS9).